Consider the following 384-residue polypeptide: MSYPNNKENSNNIGGGSFSVPSKQPQRVLQQQNTNINNHQTTSTVKSTITKPTTTGATTSTNTSTIPPTTTASSSSSSSSSSSSSSSSSSSSSSSSSQSVPKKKWCIDDFDIGKLLGMGRFGHVYLAREKKSQFIVALKVLFKNQLQTHNIEHQLRREIEIQSHLRHPNILRLFGYFYDDKRVFLIIEFAKGGECFKELQKVGSFNEQTAATYTLQIADALRYCHSKHVIHRDIKPENLLIGVGGEIKIADFGWSVHAPNTKRSTFCGTLEYLPPEVIEKKGYDQTADVWSLGILIFEFLVGRSPFTSDEEKNIFHNIQENDVYYPSSISPEAKDLISRLLVSDPHQRITLKDVINHPWIKKHAHPKSLEPTKLGLPLPSQMTY.

Polar residues-rich tracts occupy residues 1 to 12 (MSYPNNKENSNN) and 19 to 29 (SVPSKQPQRVL). Residues 1–100 (MSYPNNKENS…SSSSSSSQSV (100 aa)) form a disordered region. A compositionally biased stretch (low complexity) spans 30-99 (QQQNTNINNH…SSSSSSSSQS (70 aa)). Positions 110–360 (FDIGKLLGMG…LKDVINHPWI (251 aa)) constitute a Protein kinase domain. Residues 116-124 (LGMGRFGHV) and Lys-139 contribute to the ATP site. The Proton acceptor role is filled by Asp-233.

Belongs to the protein kinase superfamily. Ser/Thr protein kinase family. Aurora subfamily. Interacts with icpA. Forms a complex at the central spindle.

It is found in the cytoplasm. Its subcellular location is the chromosome. It localises to the centromere. The protein resides in the cytoskeleton. The protein localises to the spindle pole. It is found in the cleavage furrow. Its subcellular location is the cell projection. It localises to the neuron projection. It catalyses the reaction L-seryl-[protein] + ATP = O-phospho-L-seryl-[protein] + ADP + H(+). The enzyme catalyses L-threonyl-[protein] + ATP = O-phospho-L-threonyl-[protein] + ADP + H(+). Its function is as follows. Part of a chromosomal passenger complex. This is Aurora kinase (aurK) from Dictyostelium discoideum (Social amoeba).